The sequence spans 89 residues: Phasin PhaP (89 aa).

Helix regions lie at residues 3–26 and 39–83; these read TQFF…TWME and DTFE…ALRQ.

Homotetramer.

It localises to the cellular thylakoid membrane. The protein resides in the cytoplasm. It functions in the pathway biopolymer metabolism; poly-(R)-3-hydroxybutanoate biosynthesis. In terms of biological role, a phasin, it attaches to the polyhydroxybutyrate (PHB) granule surface regulating the number and size of PHB granules within a cell. It probably also acts as a regulator affecting the biosynthetic activity of PHB synthase in vivo. In Synechocystis sp. (strain ATCC 27184 / PCC 6803 / Kazusa), this protein is Phasin PhaP.